The following is a 133-amino-acid chain: Small ribosomal subunit protein uS9 (133 aa).

A disordered region spans residues K102–R133. Over residues L107–K118 the composition is skewed to basic and acidic residues. Residues Y119 to R133 are compositionally biased toward basic residues.

It belongs to the universal ribosomal protein uS9 family.

The sequence is that of Small ribosomal subunit protein uS9 from Deinococcus deserti (strain DSM 17065 / CIP 109153 / LMG 22923 / VCD115).